Consider the following 255-residue polypeptide: MMFNNIISPLEQFEIKDLFSLNINIINLKMSLTNFGFYIIISTIIILTLHLLITYNNKLISNSWTLTKESIYATVHSVVINQINSKEGQNYFPFIYGLFIFILMNNLLGLIPYSFSSTSHFILTFFISFTVVLGATILGFQKHQLKFFSLFVPSGCPLGLLPLLVLIELISYLARNVSLGLRLSANILSGHMLLVILSDFTFKIMSSGIFYFLIGLIPLAFIFAFSGLELGIAFIQSQVFIVLTCSYIRDSLELH.

The propeptide at 1 to 7 is removed in mature form; it reads MMFNNII. 6 helical membrane-spanning segments follow: residues 35 to 55, 91 to 111, 120 to 140, 147 to 167, 177 to 197, and 208 to 228; these read FGFYIIISTIIILTLHLLITY, YFPFIYGLFIFILMNNLLGLI, HFILTFFISFTVVLGATILGF, FFSLFVPSGCPLGLLPLLVLI, VSLGLRLSANILSGHMLLVIL, and GIFYFLIGLIPLAFIFAFSGL.

Belongs to the ATPase A chain family. In terms of assembly, F-type ATPases have 2 components, CF(1) - the catalytic core - and CF(0) - the membrane proton channel. CF(1) has five subunits: alpha(3), beta(3), gamma(1), delta(1), epsilon(1). CF(0) has three main subunits: a, b and c.

It is found in the mitochondrion inner membrane. In terms of biological role, mitochondrial membrane ATP synthase (F(1)F(0) ATP synthase or Complex V) produces ATP from ADP in the presence of a proton gradient across the membrane which is generated by electron transport complexes of the respiratory chain. F-type ATPases consist of two structural domains, F(1) - containing the extramembraneous catalytic core and F(0) - containing the membrane proton channel, linked together by a central stalk and a peripheral stalk. During catalysis, ATP synthesis in the catalytic domain of F(1) is coupled via a rotary mechanism of the central stalk subunits to proton translocation. Key component of the proton channel; it may play a direct role in the translocation of protons across the membrane. The chain is ATP synthase subunit a (ATP6) from Trichophyton rubrum (Athlete's foot fungus).